A 152-amino-acid polypeptide reads, in one-letter code: Superoxide dismutase [Cu-Zn] 2 (152 aa).

Residues histidine 45, histidine 47, and histidine 62 each coordinate Cu cation. The disordered stretch occupies residues 53–81; the sequence is TNGSMSTGPHFNPDGKQHGAPEDANRHAG. Zn(2+) contacts are provided by histidine 62, histidine 70, histidine 79, and aspartate 82. Basic and acidic residues predominate over residues 65–81; it reads PDGKQHGAPEDANRHAG. Cu cation is bound at residue histidine 119.

It belongs to the Cu-Zn superoxide dismutase family. As to quaternary structure, homodimer. Cu cation is required as a cofactor. It depends on Zn(2+) as a cofactor.

The protein resides in the cytoplasm. It catalyses the reaction 2 superoxide + 2 H(+) = H2O2 + O2. In terms of biological role, destroys radicals which are normally produced within the cells and which are toxic to biological systems. This Brassica juncea (Indian mustard) protein is Superoxide dismutase [Cu-Zn] 2 (SODCC2).